The following is a 382-amino-acid chain: Succinate--CoA ligase [ADP-forming] subunit beta (382 aa).

Residues 9-240 enclose the ATP-grasp domain; sequence KELFLRYGVK…PRDITEFEAY (232 aa). Residues Lys45, 52–54, Val94, and Glu99 contribute to the ATP site; that span reads GRG. Residues Asn193 and Asp207 each coordinate Mg(2+). Residues Asn260 and 317–319 contribute to the substrate site; that span reads GIT.

It belongs to the succinate/malate CoA ligase beta subunit family. In terms of assembly, heterotetramer of two alpha and two beta subunits. It depends on Mg(2+) as a cofactor.

The enzyme catalyses succinate + ATP + CoA = succinyl-CoA + ADP + phosphate. It carries out the reaction GTP + succinate + CoA = succinyl-CoA + GDP + phosphate. The protein operates within carbohydrate metabolism; tricarboxylic acid cycle; succinate from succinyl-CoA (ligase route): step 1/1. Succinyl-CoA synthetase functions in the citric acid cycle (TCA), coupling the hydrolysis of succinyl-CoA to the synthesis of either ATP or GTP and thus represents the only step of substrate-level phosphorylation in the TCA. The beta subunit provides nucleotide specificity of the enzyme and binds the substrate succinate, while the binding sites for coenzyme A and phosphate are found in the alpha subunit. The sequence is that of Succinate--CoA ligase [ADP-forming] subunit beta from Pyrobaculum islandicum (strain DSM 4184 / JCM 9189 / GEO3).